The following is a 115-amino-acid chain: UPF0342 protein Bsph_0375 (115 aa).

Belongs to the UPF0342 family.

This chain is UPF0342 protein Bsph_0375, found in Lysinibacillus sphaericus (strain C3-41).